We begin with the raw amino-acid sequence, 104 residues long: Pyrimidine/purine nucleoside phosphorylase (104 aa).

The protein belongs to the nucleoside phosphorylase PpnP family.

It catalyses the reaction a purine D-ribonucleoside + phosphate = a purine nucleobase + alpha-D-ribose 1-phosphate. The enzyme catalyses adenosine + phosphate = alpha-D-ribose 1-phosphate + adenine. The catalysed reaction is cytidine + phosphate = cytosine + alpha-D-ribose 1-phosphate. It carries out the reaction guanosine + phosphate = alpha-D-ribose 1-phosphate + guanine. It catalyses the reaction inosine + phosphate = alpha-D-ribose 1-phosphate + hypoxanthine. The enzyme catalyses thymidine + phosphate = 2-deoxy-alpha-D-ribose 1-phosphate + thymine. The catalysed reaction is uridine + phosphate = alpha-D-ribose 1-phosphate + uracil. It carries out the reaction xanthosine + phosphate = alpha-D-ribose 1-phosphate + xanthine. Its function is as follows. Catalyzes the phosphorolysis of diverse nucleosides, yielding D-ribose 1-phosphate and the respective free bases. Can use uridine, adenosine, guanosine, cytidine, thymidine, inosine and xanthosine as substrates. Also catalyzes the reverse reactions. This chain is Pyrimidine/purine nucleoside phosphorylase, found in Leptothrix cholodnii (strain ATCC 51168 / LMG 8142 / SP-6) (Leptothrix discophora (strain SP-6)).